A 60-amino-acid chain; its full sequence is Large ribosomal subunit protein uL30 (60 aa).

Belongs to the universal ribosomal protein uL30 family. In terms of assembly, part of the 50S ribosomal subunit.

The sequence is that of Large ribosomal subunit protein uL30 from Saccharopolyspora erythraea (strain ATCC 11635 / DSM 40517 / JCM 4748 / NBRC 13426 / NCIMB 8594 / NRRL 2338).